A 348-amino-acid chain; its full sequence is Methylthioribose-1-phosphate isomerase (348 aa).

Substrate contacts are provided by residues 47–49 (RGA), R90, and Q196. D237 acts as the Proton donor in catalysis. 247–248 (NK) serves as a coordination point for substrate.

The protein belongs to the eIF-2B alpha/beta/delta subunits family. MtnA subfamily.

It carries out the reaction 5-(methylsulfanyl)-alpha-D-ribose 1-phosphate = 5-(methylsulfanyl)-D-ribulose 1-phosphate. It functions in the pathway amino-acid biosynthesis; L-methionine biosynthesis via salvage pathway; L-methionine from S-methyl-5-thio-alpha-D-ribose 1-phosphate: step 1/6. Its function is as follows. Catalyzes the interconversion of methylthioribose-1-phosphate (MTR-1-P) into methylthioribulose-1-phosphate (MTRu-1-P). The polypeptide is Methylthioribose-1-phosphate isomerase (Synechococcus sp. (strain ATCC 27144 / PCC 6301 / SAUG 1402/1) (Anacystis nidulans)).